A 553-amino-acid polypeptide reads, in one-letter code: Copine-9 (553 aa).

C2 domains lie at 1 to 125 (MSLS…ERPL) and 132 to 255 (KCGT…FTVY). Residues Asp163, Asp169, Asp225, Asp227, and Asp233 each contribute to the Ca(2+) site. Positions 299–500 (NFTVAIDFTA…VQFVPFRDYV (202 aa)) constitute a VWFA domain. Positions 531–553 (TRDIQPRPPPPVSPNPTPAPEQP) are disordered. Residues 536–553 (PRPPPPVSPNPTPAPEQP) show a composition bias toward pro residues.

It belongs to the copine family. It depends on Ca(2+) as a cofactor.

Its function is as follows. Probable calcium-dependent phospholipid-binding protein that may play a role in calcium-mediated intracellular processes. Plays a role in dendrite formation by melanocytes. The protein is Copine-9 of Mus musculus (Mouse).